A 610-amino-acid chain; its full sequence is MTDLFDYKEFLKTVTSQPGVYRMYDTAGTVIYVGKAKDLKKRLTSYFRAQVANRKTETLVKNIAQIDVTVTHTETEALLLEHNYIKLYQPRYNVLLRDDKSYPLIFLSADEHPRLAVHRGAKHEKGEYFGPFPNSYAVRETLALLQKLFPVRQCENSVYRNRSRPCLQYQIGRCSGPCVEGLVSEEEYQRQVDYVRLFLSGKDQQVLTQLITRMEEASQQLHFEDAARIRDQIQAVRRVTEQQFVSGDSEDLDVIGVAFDAGLACVHVLFIRLGKVLGSRSYFPKVPAGTELSEVVQTFVGQFYLQGSQGRTLPGEILLDFTLTEKDLLASSLSELAGRKIQIQSRPRGDRARYLKLARTNASTALITRLSQQSTIHQRMKELAKVLKLDEINRMECFDISHTMGEQTVASCVVFDANGPVRSEYRRYNISGITPGDDYAAMAQVLKRRYGKALDDQKIPDVIFIDGGKGQLSQAFDVFASLNVPWDKQKPLLVGVAKGSDRKAGLETLFLASEGEGFSLPPDSPALHLIQHIRDDSHNHAITGHRQRRSKVKNTSALEMIEGVGPKRRQVLLKYMGGLQPLFNASVEEIAKVPGISQALAEKIHNALKH.

One can recognise a GIY-YIG domain in the interval 16–94; that stretch reads SQPGVYRMYD…IKLYQPRYNV (79 aa). A UVR domain is found at 204-239; the sequence is QQVLTQLITRMEEASQQLHFEDAARIRDQIQAVRRV.

This sequence belongs to the UvrC family. In terms of assembly, interacts with UvrB in an incision complex.

It is found in the cytoplasm. In terms of biological role, the UvrABC repair system catalyzes the recognition and processing of DNA lesions. UvrC both incises the 5' and 3' sides of the lesion. The N-terminal half is responsible for the 3' incision and the C-terminal half is responsible for the 5' incision. This Yersinia pseudotuberculosis serotype O:1b (strain IP 31758) protein is UvrABC system protein C.